A 233-amino-acid chain; its full sequence is Ribonuclease HII (233 aa).

Positions 21-211 (KVIAGVDEVG…LDALPQWRHL (191 aa)) constitute an RNase H type-2 domain. Asp-27, Glu-28, and Asp-119 together coordinate a divalent metal cation.

This sequence belongs to the RNase HII family. The cofactor is Mn(2+). Mg(2+) serves as cofactor.

The protein localises to the cytoplasm. The catalysed reaction is Endonucleolytic cleavage to 5'-phosphomonoester.. Endonuclease that specifically degrades the RNA of RNA-DNA hybrids. This chain is Ribonuclease HII, found in Streptomyces avermitilis (strain ATCC 31267 / DSM 46492 / JCM 5070 / NBRC 14893 / NCIMB 12804 / NRRL 8165 / MA-4680).